The primary structure comprises 660 residues: tRNA 5-methylaminomethyl-2-thiouridine biosynthesis bifunctional protein MnmC (660 aa).

The interval 1 to 242 (MTDRIVPATL…KRAMLVGEFA (242 aa)) is tRNA (mnm(5)s(2)U34)-methyltransferase. Residues 266–660 (IGAGLAGCAV…VRALRHGRVA (395 aa)) form an FAD-dependent cmnm(5)s(2)U34 oxidoreductase region.

This sequence in the N-terminal section; belongs to the methyltransferase superfamily. tRNA (mnm(5)s(2)U34)-methyltransferase family. It in the C-terminal section; belongs to the DAO family. The cofactor is FAD.

The protein resides in the cytoplasm. The enzyme catalyses 5-aminomethyl-2-thiouridine(34) in tRNA + S-adenosyl-L-methionine = 5-methylaminomethyl-2-thiouridine(34) in tRNA + S-adenosyl-L-homocysteine + H(+). Catalyzes the last two steps in the biosynthesis of 5-methylaminomethyl-2-thiouridine (mnm(5)s(2)U) at the wobble position (U34) in tRNA. Catalyzes the FAD-dependent demodification of cmnm(5)s(2)U34 to nm(5)s(2)U34, followed by the transfer of a methyl group from S-adenosyl-L-methionine to nm(5)s(2)U34, to form mnm(5)s(2)U34. In Burkholderia pseudomallei (strain 1710b), this protein is tRNA 5-methylaminomethyl-2-thiouridine biosynthesis bifunctional protein MnmC.